Reading from the N-terminus, the 116-residue chain is Large ribosomal subunit protein bL19 (116 aa).

The protein belongs to the bacterial ribosomal protein bL19 family.

This protein is located at the 30S-50S ribosomal subunit interface and may play a role in the structure and function of the aminoacyl-tRNA binding site. The polypeptide is Large ribosomal subunit protein bL19 (Pseudomonas savastanoi pv. phaseolicola (strain 1448A / Race 6) (Pseudomonas syringae pv. phaseolicola (strain 1448A / Race 6))).